We begin with the raw amino-acid sequence, 175 residues long: Bifunctional protein PyrR (175 aa).

Substrate contacts are provided by residues 40–41 (TR), R85, 102–110 (DDVLYTGRT), R135, and V159. Positions 98–110 (VIIIDDVLYTGRT) match the PRPP-binding motif.

Belongs to the purine/pyrimidine phosphoribosyltransferase family. PyrR subfamily. In terms of assembly, homodimer and homohexamer; in equilibrium.

It carries out the reaction UMP + diphosphate = 5-phospho-alpha-D-ribose 1-diphosphate + uracil. In terms of biological role, regulates transcriptional attenuation of the pyrimidine nucleotide (pyr) operon by binding in a uridine-dependent manner to specific sites on pyr mRNA. This disrupts an antiterminator hairpin in the RNA and favors formation of a downstream transcription terminator, leading to a reduced expression of downstream genes. Functionally, also displays a weak uracil phosphoribosyltransferase activity which is not physiologically significant. This is Bifunctional protein PyrR from Staphylococcus saprophyticus subsp. saprophyticus (strain ATCC 15305 / DSM 20229 / NCIMB 8711 / NCTC 7292 / S-41).